We begin with the raw amino-acid sequence, 202 residues long: Outer-membrane lipoprotein carrier protein (202 aa).

Positions 1 to 20 are cleaved as a signal peptide; sequence MKKQLLIGSVLLVASSQVWA.

This sequence belongs to the LolA family. As to quaternary structure, monomer.

The protein localises to the periplasm. Its function is as follows. Participates in the translocation of lipoproteins from the inner membrane to the outer membrane. Only forms a complex with a lipoprotein if the residue after the N-terminal Cys is not an aspartate (The Asp acts as a targeting signal to indicate that the lipoprotein should stay in the inner membrane). The chain is Outer-membrane lipoprotein carrier protein from Aeromonas salmonicida (strain A449).